A 92-amino-acid polypeptide reads, in one-letter code: Conotoxin Mr15.2 (92 aa).

The first 20 residues, methionine 1–phenylalanine 20, serve as a signal peptide directing secretion. A propeptide spanning residues aspartate 21–arginine 53 is cleaved from the precursor. The tract at residues glycine 30–serine 49 is disordered.

This sequence belongs to the conotoxin N superfamily. Contains 4 disulfide bonds. As to expression, expressed by the venom duct.

Its subcellular location is the secreted. This is Conotoxin Mr15.2 from Conus marmoreus (Marble cone).